The chain runs to 220 residues: Probable transcriptional regulator NRG2 (220 aa).

2 consecutive C2H2-type zinc fingers follow at residues histidine 153–histidine 175 and histidine 181–histidine 205.

Its subcellular location is the nucleus. In terms of biological role, transcriptional repressor. This Saccharomyces cerevisiae (strain ATCC 204508 / S288c) (Baker's yeast) protein is Probable transcriptional regulator NRG2 (NRG2).